The chain runs to 819 residues: Capsid-associated protein Vp91 (819 aa).

A signal peptide spans 1–18 (MSDVVLLVLAIILITIFT). The C2HC BV-type zinc finger occupies 147–196 (CVPVDPCAGRAPGRYPMDERLLDTLVHNQPSDKDYSAGEHLHHPTLYLRC). 2 cysteine pairs are disulfide-bonded: Cys-207–Cys-220 and Cys-260–Cys-273. Residue Asn-210 is glycosylated (N-linked (GlcNAc...) asparagine; by host). The 59-residue stretch at 223-281 (NELCEGRPDGFVLAYFPETLRVNEFVECRGGKHVVARCPDQQVFDRALMTCVQTHPCAF) folds into the Chitin-binding type-2 domain. N-linked (GlcNAc...) asparagine; by host glycans are attached at residues Asn-588 and Asn-609. Residues 650–671 (GDGDHWAPEAPPTQPEAPPAPE) form a disordered region. The segment covering 658–671 (EAPPTQPEAPPAPE) has biased composition (pro residues). N-linked (GlcNAc...) asparagine; by host glycosylation is present at Asn-752.

It localises to the virion. Its function is as follows. Probable capsid-associated protein. The chain is Capsid-associated protein Vp91 (p91) from Orgyia pseudotsugata (Douglas-fir tussock moth).